The following is a 312-amino-acid chain: MINREDLLKNPVEDIALSDLEKYSDIVNVFDKIYGFSSEGIVRGSKILKEMIKDADLRFLSFTANLVSTGLRGLFADLVKRGYFNIIVTTGGTIDHDLARSFGGVYYKGSFDIDDAMLKDLEIHRLGNVLVPFESYGKVIEEIVRKFLPEIAKDKKEIPAYELLWEFGKRISDSNSILRAAYEKKVPVIVPGIVDGSFGTNLFIQSQFLNFKINLFEDMRLIKDLVFSCKKSGALIIGGGISKHHTIWWNQFKDGLDYAVYVTTAQEYDGSLSGAKPREAISWNKIRPNAKHATIYGDATIIVPILAASLLS.

Lys285 (nucleophile) is an active-site residue.

It belongs to the deoxyhypusine synthase family. It depends on NAD(+) as a cofactor.

It carries out the reaction [eIF5A protein]-L-lysine + spermidine = [eIF5A protein]-deoxyhypusine + propane-1,3-diamine. It functions in the pathway protein modification; eIF5A hypusination. In terms of biological role, catalyzes the NAD-dependent oxidative cleavage of spermidine and the subsequent transfer of the butylamine moiety of spermidine to the epsilon-amino group of a specific lysine residue of the eIF-5A precursor protein to form the intermediate deoxyhypusine residue. This Saccharolobus islandicus (strain Y.N.15.51 / Yellowstone #2) (Sulfolobus islandicus) protein is Probable deoxyhypusine synthase.